We begin with the raw amino-acid sequence, 106 residues long: UPF0145 protein Pfl01_1745 (106 aa).

Belongs to the UPF0145 family.

The protein is UPF0145 protein Pfl01_1745 of Pseudomonas fluorescens (strain Pf0-1).